We begin with the raw amino-acid sequence, 226 residues long: Survival motor neuron protein (226 aa).

Basic and acidic residues predominate over residues Ala35–Glu44. Positions Ala35–Val68 are disordered. In terms of domain architecture, Tudor spans Ser69 to Arg128. Residues Asp137–Pro172 are disordered. Residues Lys154–Arg163 are compositionally biased toward basic residues. Residues Ser159–Lys226 are required for homodimerization.

It belongs to the SMN family. In terms of assembly, homodimer (via C-terminal region). Component of the core survival motor neuron (SMN) complex composed of Smn, Gem2, Gem3, rig/Gem5 and one of 3 almost identical Gem4 paralogs encoded by Glos/Gem4a, Gem4b or Gem4c. Interacts with Gem3 (via C-terminus); the interaction is direct and stabilizes Smn. Part of a minimal SMN complex composed of Smn and Gem2 only; this complex is active in UsnRNP assembly. The SMN complex associates with the entire set of spliceosomal snRNP Sm proteins, SmB, SmD1, SmD2, SmD3, SmE, SmF and SmG, and with the snRNP-specific proteins snRNP-U1-70K, U2A, snf/U1A and U5-116KD. Interacts with Glos/Gem4a; the interaction is probably indirect. Interacts with Sbat and Vlet; Sbat and Vlet, along with Hez, may form an accessory subcomplex involved in SMN complex function. Interacts weakly with Gem3. Interacts with SmB and SmD1; the interaction is favored by methylation of the Sm proteins. Interacts with Actn; the interaction occurs in thoracic tissues and in adult flies. Interacts with Rpp20. Interacts with msk and Snup; these interactions are RNA-dependent. In late first instar larvae, expressed in pNBs. Expression increases as the pNBs enlarge, with the highest accumulation observed in dividing pNBs of second and third instar larvae. Enriched in type ID (thoracic and brain lobe), type IA and all the mira-expressing NBs of the brain lobes. In larvae, also expressed in muscle fibers. In larval and adult testis, expressed in germline stem cells and gonialblast, expression decreases as cells differentiate into cysts and spermatocytes. In adult fly thorax, expressed in the IFMs. In adult ovary, expressed in germline stem cells, cystoblasts, follicle cells, nurse cells and oocyte (at protein level). Also expressed in larval salivary glands.

It localises to the cytoplasm. The protein localises to the nucleus. Its subcellular location is the U-body. The protein resides in the gem. It is found in the cajal body. It localises to the myofibril. The protein localises to the sarcomere. Its subcellular location is the i band. The protein resides in the z line. Core component of the survival motor neuron (SMN) complex that plays an essential role in spliceosomal small nuclear ribonucleoprotein (snRNP) assembly in the cytoplasm, is required for pre-mRNA splicing in the nucleus and acts as a chaperone that discriminates target and non-target RNAs of Sm proteins. A major component of nuclear bodies known as gems (gemini of Cajal bodies) thought to be storage depots of excess SMN complexes. Required for normal expression of spliceosomal snRNAs and for U12 intron splicing. Required in cholinergic neurons, but not in motor neurons, to ensure correct splicing and proper levels of stas mRNA and normal neurotransmitter release by motor neurons. However, Smn is required in motor neurons, but not in cholinergic neurons, for normal motor behavior but plays no role in synaptic transmission according to a report. In both muscle and neurons, required for the formation of a normal neuromuscular junction (NMJ) structure. Plays a neuron-specific role in long-term homeostatic compensation at the larval NMJ. In the thorax of adult flies, required for Act88F, an indirect flight muscle (IFM)-specific actin, expression and for proper IFM myofibril formation. In nurse cells, oocytes and follicle cells, required to maintain normal organization of nuclear compartments including chromosomes, nucleoli, Cajal bodies, histone locus bodies and heterochromatin. Required for the functional integrity of the cytoplasmic U snRNP body (U body) and P body. Required in dividing postembryonic neuroblasts (pNBs) for the correct basal localization of mira. The tight regulation of its expression is critical for stem cell division, proliferation and differentiation in male germline and developing central nervous system (CNS). Required for tracheal terminal cell lumen formation. The polypeptide is Survival motor neuron protein (Drosophila melanogaster (Fruit fly)).